The following is a 174-amino-acid chain: Large ribosomal subunit protein uL10 (174 aa).

The protein belongs to the universal ribosomal protein uL10 family. As to quaternary structure, part of the ribosomal stalk of the 50S ribosomal subunit. The N-terminus interacts with L11 and the large rRNA to form the base of the stalk. The C-terminus forms an elongated spine to which L12 dimers bind in a sequential fashion forming a multimeric L10(L12)X complex.

Forms part of the ribosomal stalk, playing a central role in the interaction of the ribosome with GTP-bound translation factors. This chain is Large ribosomal subunit protein uL10, found in Synechococcus sp. (strain RCC307).